The following is a 446-amino-acid chain: tRNA modification GTPase MnmE (446 aa).

(6S)-5-formyl-5,6,7,8-tetrahydrofolate-binding residues include arginine 24, glutamate 81, and lysine 120. The 153-residue stretch at 216–368 (GLHAVLIGPP…LHIRLRELAL (153 aa)) folds into the TrmE-type G domain. Asparagine 226 serves as a coordination point for K(+). GTP is bound by residues 226–231 (NAGKSS), 245–251 (TDVAGTT), and 270–273 (DTAG). Residue serine 230 coordinates Mg(2+). Residues threonine 245, valine 247, and threonine 250 each coordinate K(+). Residue threonine 251 participates in Mg(2+) binding. Lysine 446 is a (6S)-5-formyl-5,6,7,8-tetrahydrofolate binding site.

The protein belongs to the TRAFAC class TrmE-Era-EngA-EngB-Septin-like GTPase superfamily. TrmE GTPase family. In terms of assembly, homodimer. Heterotetramer of two MnmE and two MnmG subunits. K(+) serves as cofactor.

Its subcellular location is the cytoplasm. In terms of biological role, exhibits a very high intrinsic GTPase hydrolysis rate. Involved in the addition of a carboxymethylaminomethyl (cmnm) group at the wobble position (U34) of certain tRNAs, forming tRNA-cmnm(5)s(2)U34. The polypeptide is tRNA modification GTPase MnmE (Xanthomonas oryzae pv. oryzae (strain PXO99A)).